Reading from the N-terminus, the 714-residue chain is ABC transporter B family member 28 (714 aa).

5 consecutive transmembrane segments (helical) span residues 109-129, 161-181, 240-260, 340-360, and 361-381; these read LSVC…MPVF, IFTI…MAIL, ICIL…LMLA, VAVY…VKTG, and ELAV…TFAV. The ABC transmembrane type-1 domain maps to 109–393; it reads LSVCLLTLLG…LVNTFGDLRG (285 aa). An ABC transporter domain is found at 470–708; it reads VCLDDVHFAY…KGSYASLVGT (239 aa). 505-512 lines the ATP pocket; the sequence is GSSGAGKS.

Belongs to the ABC transporter superfamily. ABCB family. Multidrug resistance exporter (TC 3.A.1.201) subfamily.

The protein resides in the membrane. This chain is ABC transporter B family member 28 (ABCB28), found in Arabidopsis thaliana (Mouse-ear cress).